Here is a 330-residue protein sequence, read N- to C-terminus: GTP 3',8-cyclase (330 aa).

The region spanning 9–225 is the Radical SAM core domain; sequence RFGRTVNYVR…IRRHHELIPA (217 aa). Arg18 is a binding site for GTP. Cys25 and Cys29 together coordinate [4Fe-4S] cluster. S-adenosyl-L-methionine is bound at residue Tyr31. Cys32 provides a ligand contact to [4Fe-4S] cluster. Position 67 (Arg67) interacts with GTP. Gly71 contributes to the S-adenosyl-L-methionine binding site. Position 97 (Thr97) interacts with GTP. Ser121 provides a ligand contact to S-adenosyl-L-methionine. Lys158 lines the GTP pocket. An S-adenosyl-L-methionine-binding site is contributed by Met192. Residues Cys256 and Cys259 each contribute to the [4Fe-4S] cluster site. 261 to 263 is a binding site for GTP; it reads RVR. Cys273 contributes to the [4Fe-4S] cluster binding site.

It belongs to the radical SAM superfamily. MoaA family. As to quaternary structure, monomer and homodimer. Requires [4Fe-4S] cluster as cofactor.

The enzyme catalyses GTP + AH2 + S-adenosyl-L-methionine = (8S)-3',8-cyclo-7,8-dihydroguanosine 5'-triphosphate + 5'-deoxyadenosine + L-methionine + A + H(+). Its pathway is cofactor biosynthesis; molybdopterin biosynthesis. In terms of biological role, catalyzes the cyclization of GTP to (8S)-3',8-cyclo-7,8-dihydroguanosine 5'-triphosphate. The protein is GTP 3',8-cyclase of Marinobacter nauticus (strain ATCC 700491 / DSM 11845 / VT8) (Marinobacter aquaeolei).